Here is a 1503-residue protein sequence, read N- to C-terminus: Protein Skeletor, isoforms D/E (1503 aa).

The N-terminal stretch at 1-28 (MLAMKDKPWLLLFGLLAALSCLASFGDA) is a signal peptide. 2 consecutive DM13 domains span residues 34–143 (GTKI…VSIP) and 151–258 (PQKI…VRLP). Residues 287 to 419 (LAFEVRWAVA…GAESVVWAIG (133 aa)) enclose the DOMON domain. Disordered stretches follow at residues 451–491 (PLPE…NVEP), 830–857 (NPNLNPNHPNQNPIPNPHQKPNVTPTEI), 1086–1106 (IFNQPGGKGKGDQKPKASSVS), and 1426–1503 (EFRG…GRRA). Residues 830 to 840 (NPNLNPNHPNQ) are compositionally biased toward low complexity. Positions 1452 to 1491 (SSSSGSTIYPYSSSTGASTSTVSSSASSPLSSSSLRPIST) are enriched in low complexity.

As to quaternary structure, interacts with Chro and Mgtor as part of a macromolecular complex forming the spindle matrix. Chro colocalizes with Skeletor (Skel) on the chromosomes at interphase and on spindle during metaphase.

Its subcellular location is the cytoplasm. The protein resides in the cytoskeleton. The protein localises to the spindle. It localises to the nucleus. It is found in the nucleolus. Its subcellular location is the chromosome. Provides structural support to stabilize and organize the microtubule spindle during mitosis (within embryonic somatic cells) and meiosis (within spermatocytes). The role in mitosis regulation depends on the Ran pathway. This Drosophila melanogaster (Fruit fly) protein is Protein Skeletor, isoforms D/E.